Here is a 1146-residue protein sequence, read N- to C-terminus: Transcription-repair-coupling factor (1146 aa).

Residues 617 to 778 (DMCQPKAMDR…MNGIRDLSII (162 aa)) enclose the Helicase ATP-binding domain. 630 to 637 (GDVGFGKT) serves as a coordination point for ATP. A DEEH box motif is present at residues 731–734 (DEEH). The Helicase C-terminal domain maps to 800-953 (VREAILREIL…GFILATHDLE (154 aa)).

In the N-terminal section; belongs to the UvrB family. This sequence in the C-terminal section; belongs to the helicase family. RecG subfamily.

It localises to the cytoplasm. Its function is as follows. Couples transcription and DNA repair by recognizing RNA polymerase (RNAP) stalled at DNA lesions. Mediates ATP-dependent release of RNAP and its truncated transcript from the DNA, and recruitment of nucleotide excision repair machinery to the damaged site. The polypeptide is Transcription-repair-coupling factor (Haemophilus influenzae (strain ATCC 51907 / DSM 11121 / KW20 / Rd)).